We begin with the raw amino-acid sequence, 161 residues long: Type IV major fimbrial protein FimA (161 aa).

The propeptide at 1–7 (MKSLQKG) is leader sequence. Phenylalanine 8 is subject to N-methylphenylalanine. A helical transmembrane segment spans residues 8 to 28 (FTLIELMIVVAIIGILAAFAI). Cysteine 63 and cysteine 105 are disulfide-bonded.

This sequence belongs to the N-Me-Phe pilin family. The pili are polar flexible filaments of about 5.4 nanometers diameter and 2.5 micrometers average length; they consist of only a single polypeptide chain arranged in a helical configuration of five subunits per turn in the assembled pilus.

Its subcellular location is the fimbrium. It localises to the membrane. Functionally, major component of the type IV fimbriae that plays an essential role in twitching motility, natural transformation, and protease secretion. The protein is Type IV major fimbrial protein FimA (fimA) of Dichelobacter nodosus (Bacteroides nodosus).